We begin with the raw amino-acid sequence, 719 residues long: Solute carrier organic anion transporter family member 6A1 (719 aa).

The disordered stretch occupies residues 1–46 (MFVGVARHSGSQDEVSRGVEPLEAARAQPAKDRRAKGTPKSSKPGK). Topologically, residues 1-106 (MFVGVARHSG…TCCECCNNIR (106 aa)) are cytoplasmic. Positions 33 to 46 (RRAKGTPKSSKPGK) are enriched in basic residues. A helical transmembrane segment spans residues 107 to 126 (CFMIFYCILLICQGVVFGLI). The Extracellular segment spans residues 127–145 (DVSIGDFQKEYQLKTIEKL). The helical transmembrane segment at 146 to 166 (ALEKSYDISSGLVAIFIAFYG) threads the bilayer. Residues 167–171 (DRKKV) lie on the Cytoplasmic side of the membrane. A helical transmembrane segment spans residues 172–196 (IWFVASSFLIGLGSLLCAFPSINEE). Over 197-223 (NKQSKVGIEDICEEIKVVSGCQSSGIS) the chain is Extracellular. A helical membrane pass occupies residues 224-254 (FQSKYLSFFILGQTVQGIAGMPLYILGITFI). Residues 255–274 (DENVATHSAGIYLGIAECTS) are Cytoplasmic-facing. A helical membrane pass occupies residues 275–295 (MIGYALGYVLGAPLVKVPENT). The Extracellular portion of the chain corresponds to 296–311 (TSATNTTVNNGSPEWL). Asn-300 carries N-linked (GlcNAc...) asparagine glycosylation. The helical transmembrane segment at 312–336 (WTWWINFLFAAVVAWCTLIPLSCFP) threads the bilayer. Over 337 to 378 (NNMPGSTRIKARKRKQLHFFDSRLKDLKLGTNIKDLCAALWI) the chain is Cytoplasmic. Residues 379-400 (LMKNPVLICLALSKATEYLVII) form a helical membrane-spanning segment. At 401-420 (GASEFLPIYLENQFILTPTV) the chain is on the extracellular side. The chain crosses the membrane as a helical span at residues 421-444 (ATTLAGLVLIPGGALGQLLGGVIV). Over 445 to 448 (STLE) the chain is Cytoplasmic. The chain crosses the membrane as a helical span at residues 449–472 (MSCKALMRFIMVTSVISLILLVFI). Topologically, residues 473–581 (IFVRCNPVQF…DAKCYKLPLF (109 aa)) are extracellular. Residues 496-551 (GNLTAPCNEKCRCSSSIYSSICGRDDIEYFSPCFAGCTYSKAQNQKKMYYNCSCIK) form the Kazal-like domain. N-linked (GlcNAc...) asparagine glycosylation occurs at Asn-497. Disulfide bonds link Cys-502-Cys-532, Cys-508-Cys-528, and Cys-517-Cys-549. N-linked (GlcNAc...) asparagine glycosylation is present at Asn-546. A helical transmembrane segment spans residues 582 to 604 (IAFIFSTLIFSGFSGVPIVLAMT). At 605-613 (RVVPDKLRS) the chain is on the cytoplasmic side. The helical transmembrane segment at 614–639 (LALGVSYVILRIFGTIPGPSIFKMSG) threads the bilayer. Residues 640–673 (ETSCILRDVNKCGHTGRCWIYNKTKMAFLLVGIC) are Extracellular-facing. Asn-661 is a glycosylation site (N-linked (GlcNAc...) asparagine). The chain crosses the membrane as a helical span at residues 674-691 (FLCKLCTIIFTTIAFFIY). The Cytoplasmic portion of the chain corresponds to 692–719 (KRRLNENTDFPDVTVKNPKVKKKEETDL).

Belongs to the organo anion transporter (TC 2.A.60) family. Strongly expressed in testis. Weakly expressed in spleen, brain, fetal brain and placenta. Detected in lung tumors.

It is found in the cell membrane. The protein is Solute carrier organic anion transporter family member 6A1 (SLCO6A1) of Homo sapiens (Human).